Reading from the N-terminus, the 125-residue chain is MSSSPAQRHTRKTQIGFVSSRSGDKSIKVTVPYKSPHPLYHKIVNRQTVLHVHDEKNEAKLGDTVEVMETRPMSRLKRWRIVSIVQRAVTTDAVAISETDVAAQVPTKTTASNTPAPAEQPAPQA.

2 disordered regions span residues 1–21 and 101–125; these read MSSS…VSSR and VAAQ…APQA.

It belongs to the universal ribosomal protein uS17 family. As to quaternary structure, part of the 30S ribosomal subunit.

In terms of biological role, one of the primary rRNA binding proteins, it binds specifically to the 5'-end of 16S ribosomal RNA. This Opitutus terrae (strain DSM 11246 / JCM 15787 / PB90-1) protein is Small ribosomal subunit protein uS17.